Consider the following 320-residue polypeptide: Aspartate carbamoyltransferase catalytic subunit (320 aa).

Carbamoyl phosphate-binding residues include Arg-68 and Thr-69. An L-aspartate-binding site is contributed by Lys-96. Arg-118, His-148, and Gln-151 together coordinate carbamoyl phosphate. Positions 181 and 236 each coordinate L-aspartate. Carbamoyl phosphate-binding residues include Gly-277 and Pro-278.

This sequence belongs to the aspartate/ornithine carbamoyltransferase superfamily. ATCase family. As to quaternary structure, heterododecamer (2C3:3R2) of six catalytic PyrB chains organized as two trimers (C3), and six regulatory PyrI chains organized as three dimers (R2).

The catalysed reaction is carbamoyl phosphate + L-aspartate = N-carbamoyl-L-aspartate + phosphate + H(+). It functions in the pathway pyrimidine metabolism; UMP biosynthesis via de novo pathway; (S)-dihydroorotate from bicarbonate: step 2/3. Catalyzes the condensation of carbamoyl phosphate and aspartate to form carbamoyl aspartate and inorganic phosphate, the committed step in the de novo pyrimidine nucleotide biosynthesis pathway. This chain is Aspartate carbamoyltransferase catalytic subunit, found in Acidovorax ebreus (strain TPSY) (Diaphorobacter sp. (strain TPSY)).